The primary structure comprises 575 residues: MFGIQDTLGRGPALKDKSLGAEMDSVRSWVRNVGVVDANVAAQSGVALSRAHFEKQPPSNLRKSNFFHFVLALYDRQGQPVEIERTAFVDFVENDKEQGNEKTNNGTHYKLQLLYSNGVRTEQDLYVRLIDSVTKQPIAYEGQNKNPEMCRVLLTHEVMCSRCCEKKSCGNRNETPSDPVIIDRFFLKFFLKCNQNCLKTAGNPRDMRRFQVVLSTTVNVDGHVLAVSDNMFVHNNSKHGRRARRLDPSEATPCIKAISPSEGWTTGGAMVIIIGDNFFDGLQVVFGTMLVWSELITPHAIRVQTPPRHIPGVVEVTLSYKSKQFCKGAPGRFIYTALNEPTIDYGFQRLQKVIPRHPGDPERLAKEMLLKRAADLVEALYGTPHNNQDIILKRAADIAEALYSVPRNPSQIPALSSSPAHSGMMGINSYGSQLGVSISESTQGNNQGYIRNTSSISPRGYSSSSTPQQSNYSTSSNSMNGYSNVPMANLGVPGSPGFLNGSPTGSPYGIMSSSPTVGSSSTSSILPFSSSVFPAVKQKSAFAPVIRPQGSPSPACSSGNGNGFRAMTGLVVPPM.

The segment at 62 to 65 (RKSN) is interaction with DNA. The C5-type zinc finger occupies 150–169 (CRVLLTHEVMCSRCCEKKSC). Interaction with DNA stretches follow at residues 196 to 203 (NCLKTAGN) and 235 to 238 (NNSK). An IPT/TIG domain is found at 253–336 (PCIKAISPSE…KGAPGRFIYT (84 aa)). A compositionally biased stretch (polar residues) spans 441-453 (STQGNNQGYIRNT). The disordered stretch occupies residues 441 to 479 (STQGNNQGYIRNTSSISPRGYSSSSTPQQSNYSTSSNSM). A compositionally biased stretch (low complexity) spans 454–479 (SSISPRGYSSSSTPQQSNYSTSSNSM).

Belongs to the COE family. Forms either a homodimer or a heterodimer with a related family member. Interacts with SIX1. In terms of tissue distribution, in adult expressed in olfactory epithelium and at a much lower level in Purkinje cells of the cerebellum. In embryo expressed in epithalamus, in cells near the ventricular zone of mesencephalon and on the ventral surface of rhombencephalon, in the developing vomeronasal organ, at a lower level in developing spinal cord. Not expressed in developing retina, inner ear, dorsal root ganglia, trigeminal ganglia and glossopharyngeal ganglia.

The protein resides in the nucleus. Its function is as follows. Transcription factor that, in osteoblasts, activates the decoy receptor for RANKL, TNFRSF11B, which in turn regulates osteoclast differentiation. Acts in synergy with the Wnt-responsive LEF1/CTNNB1 pathway. Recognizes variations of the palindromic sequence 5'-ATTCCCNNGGGAATT-3'. The sequence is that of Transcription factor COE2 (Ebf2) from Mus musculus (Mouse).